The chain runs to 457 residues: MALWGGRFTQAADQRFKQFNDSLRFDYRLAEQDIVGSVAWSKALVTVGVLTAEEQAQLEEALNVLLEDVRARPQQILESDAEDIHSWVEGKLIDKVGQLGKKLHTGRSRNDQVATDLKLWCKDTVSELLTANRQLQSALVETAQNNQDAVMPGYTHLQRAQPVTFAHWCLAYVEMLARDESRLQDALKRLDVSPLGCGALAGTAYEIDREQLAGWLGFASATRNSLDSVSDRDHVLELLSAAAIGMVHLSRFAEDLIFFNTGEAGFVELSDRVTSGSSLMPQKKNPDALELIRGKCGRVQGALTGMMMTLKGLPLAYNKDMQEDKEGLFDALDTWLDCLHMAALVLDGIQVKRPRCQEAAQQGYANATELADYLVAKGVPFREAHHIVGEAVVEAIRQGKPLEDLPLSELQKFSQVIDEDVYPILSLQSCLDKRAAKGGVSPQQVAQAIAFAQARLG.

This sequence belongs to the lyase 1 family. Argininosuccinate lyase subfamily.

The protein resides in the cytoplasm. It catalyses the reaction 2-(N(omega)-L-arginino)succinate = fumarate + L-arginine. Its pathway is amino-acid biosynthesis; L-arginine biosynthesis; L-arginine from L-ornithine and carbamoyl phosphate: step 3/3. This is Argininosuccinate lyase from Escherichia coli O9:H4 (strain HS).